We begin with the raw amino-acid sequence, 248 residues long: Tyrosine recombinase XerD-like (248 aa).

Positions 1–72 (MKSYIEPFIA…TANQFLYYLY (72 aa)) constitute a Core-binding (CB) domain. Positions 85 to 248 (DTMKVMRTEK…PVTLEKYYKS (164 aa)) constitute a Tyr recombinase domain. Active-site residues include K149 and R213. Catalysis depends on Y245, which acts as the O-(3'-phospho-DNA)-tyrosine intermediate.

Belongs to the 'phage' integrase family. XerD-like subfamily.

It is found in the cytoplasm. Functionally, putative tyrosine recombinase. Not involved in the cutting and rejoining of the recombining DNA molecules on dif(SL) site. This chain is Tyrosine recombinase XerD-like, found in Streptococcus pyogenes serotype M18 (strain MGAS8232).